A 253-amino-acid polypeptide reads, in one-letter code: Imidazole glycerol phosphate synthase subunit HisF (253 aa).

Catalysis depends on residues D11 and D130.

Belongs to the HisA/HisF family. As to quaternary structure, heterodimer of HisH and HisF.

Its subcellular location is the cytoplasm. It catalyses the reaction 5-[(5-phospho-1-deoxy-D-ribulos-1-ylimino)methylamino]-1-(5-phospho-beta-D-ribosyl)imidazole-4-carboxamide + L-glutamine = D-erythro-1-(imidazol-4-yl)glycerol 3-phosphate + 5-amino-1-(5-phospho-beta-D-ribosyl)imidazole-4-carboxamide + L-glutamate + H(+). The protein operates within amino-acid biosynthesis; L-histidine biosynthesis; L-histidine from 5-phospho-alpha-D-ribose 1-diphosphate: step 5/9. Functionally, IGPS catalyzes the conversion of PRFAR and glutamine to IGP, AICAR and glutamate. The HisF subunit catalyzes the cyclization activity that produces IGP and AICAR from PRFAR using the ammonia provided by the HisH subunit. This chain is Imidazole glycerol phosphate synthase subunit HisF, found in Opitutus terrae (strain DSM 11246 / JCM 15787 / PB90-1).